Consider the following 253-residue polypeptide: Electron transfer flavoprotein subunit beta, mitochondrial (253 aa).

The protein belongs to the ETF beta-subunit/FixA family. As to quaternary structure, heterodimer of an alpha and a beta subunit. It depends on FAD as a cofactor. The cofactor is AMP.

It localises to the mitochondrion matrix. The electron transfer flavoprotein serves as a specific electron acceptor for several dehydrogenases, including five acyl-CoA dehydrogenases, glutaryl-CoA and sarcosine dehydrogenase. It transfers the electrons to the main mitochondrial respiratory chain via ETF-ubiquinone oxidoreductase (ETF dehydrogenase). The protein is Electron transfer flavoprotein subunit beta, mitochondrial (ETFB) of Oryza sativa subsp. japonica (Rice).